Consider the following 396-residue polypeptide: Odorant receptor 49a (396 aa).

Over 1-6 (MEKLRS) the chain is Cytoplasmic. The chain crosses the membrane as a helical span at residues 7-27 (YEDFIFMANMMFKTLGYDLFH). At 28 to 34 (TPKPWWR) the chain is on the extracellular side. Residues 35–55 (YLLVRGYFVLCTISNFYEASM) form a helical membrane-spanning segment. Over 56–70 (VTTRIIEWESLAGSP) the chain is Cytoplasmic. The helical transmembrane segment at 71-91 (SKIMRQGLHFFYMLSSQLKFI) threads the bilayer. Residues 92 to 141 (TFMINRKRLLQLSHRLKELYPHKEQNQRKYEVNKYYLSCSTRNVLYVYYF) lie on the Extracellular side of the membrane. Residues 142–162 (VMVVMALEPLVQSCIMYLIGF) form a helical membrane-spanning segment. At 163 to 209 (GKADFTYKRIFPTRLTFDSEKPLGYVLAYVIDFTYSQFIVNVSLGTD) the chain is on the cytoplasmic side. Residues 210–230 (LWMMCVSSQISMHLGYLANML) form a helical membrane-spanning segment. The Extracellular portion of the chain corresponds to 231 to 266 (ASIRPSPETEQQDCDFLASIIKRHQLMIRLQKDVNY). Residues 267 to 287 (VFGLLLASNLFTTSCLLCCMA) form a helical membrane-spanning segment. Residues 288–296 (YYTVVEGFN) are Cytoplasmic-facing. The helical transmembrane segment at 297–317 (WEGISYMMLFASVAAQFYVVS) threads the bilayer. Residues 318-396 (SHGQMLIDLS…FAVIRQTVEK (79 aa)) are Extracellular-facing.

This sequence belongs to the insect chemoreceptor superfamily. Heteromeric odorant receptor channel (TC 1.A.69) family. Or49a subfamily. As to quaternary structure, interacts with Orco. Complexes exist early in the endomembrane system in olfactory sensory neurons (OSNs), coupling these complexes to the conserved ciliary trafficking pathway.

Its subcellular location is the cell membrane. Its function is as follows. Odorant receptor which mediates acceptance or avoidance behavior, depending on its substrates. The odorant receptor repertoire encodes a large collection of odor stimuli that vary widely in identity, intensity, and duration. May form a complex with Orco to form odorant-sensing units, providing sensitive and prolonged odorant signaling and calcium permeability. Involved in the behavioral responses to butanol and 2-heptanone. In Drosophila melanogaster (Fruit fly), this protein is Odorant receptor 49a (Or49a).